We begin with the raw amino-acid sequence, 413 residues long: NADPH dehydrogenase afvA (413 aa).

FMN is bound at residue 53–56 (APLC). Position 58 (Y58) interacts with substrate. A88 and Q130 together coordinate FMN. 211-214 (HAAH) contributes to the substrate binding site. FMN-binding positions include R264 and 370–371 (GR).

It belongs to the NADH:flavin oxidoreductase/NADH oxidase family. NamA subfamily. Requires FMN as cofactor.

It carries out the reaction A + NADPH + H(+) = AH2 + NADP(+). It participates in secondary metabolite biosynthesis. NADPH dehydrogenase; part of the gene cluster that mediates the biosynthesis of aflavarin, a bicoumarin that exhibits anti-insectan activity against the fungivorous beetle C.hemipterus. In Aspergillus flavus (strain ATCC 200026 / FGSC A1120 / IAM 13836 / NRRL 3357 / JCM 12722 / SRRC 167), this protein is NADPH dehydrogenase afvA.